Consider the following 441-residue polypeptide: ATP-dependent RNA helicase RhlB (441 aa).

A Q motif motif is present at residues 9–37 (QKFADFSLNKEIKTALNESGFEFCTPIQA). The 180-residue stretch at 40-219 (LPILLQKKDI…YDHMNEPEKV (180 aa)) folds into the Helicase ATP-binding domain. 53 to 60 (AQTGTGKT) lines the ATP pocket. Positions 165 to 168 (DEAD) match the DEAD box motif. A Helicase C-terminal domain is found at 243-390 (KMRLLLSLIE…VTNYDSEGLL (148 aa)). A disordered region spans residues 401 to 441 (RKHNNRPQQGRNNSGRPQGRNGNRAGGRNGPRRHDQVRRHS).

It belongs to the DEAD box helicase family. RhlB subfamily. Component of the RNA degradosome, which is a multiprotein complex involved in RNA processing and mRNA degradation.

The protein resides in the cytoplasm. It carries out the reaction ATP + H2O = ADP + phosphate + H(+). Functionally, DEAD-box RNA helicase involved in RNA degradation. Has RNA-dependent ATPase activity and unwinds double-stranded RNA. The sequence is that of ATP-dependent RNA helicase RhlB from Shewanella woodyi (strain ATCC 51908 / MS32).